The chain runs to 296 residues: ATP-dependent ribose-1-phosphate kinase (296 aa).

Asp242 acts as the Proton acceptor in catalysis.

The protein belongs to the carbohydrate kinase PfkB family. Mg(2+) is required as a cofactor.

The catalysed reaction is alpha-D-ribose 1-phosphate + ATP = alpha-D-ribose 1,5-bisphosphate + ADP + H(+). With respect to regulation, requires salt for kinase activity. 2.0 M is the optimal KCl concentration. Its function is as follows. Kinase involved in the non-carboxylating pentose bisphosphate pathway, a nucleoside degradation pathway present in some halophilic archaea. Catalyzes the ATP-dependent phosphorylation of ribose 1-phosphate (R1P) to ribose 1,5-bisphosphate (R15P). Shows weak activity towards various other phosphate acceptors, such as xylulose, 2'-deoxyguanosine and D-ribulose. ATP is the most preferred phosphate donor, followed by CTP and GTP. The sequence is that of ATP-dependent ribose-1-phosphate kinase from Halopiger xanaduensis (strain DSM 18323 / JCM 14033 / SH-6).